A 476-amino-acid chain; its full sequence is Sedoheptulokinase (476 aa).

This sequence belongs to the FGGY kinase family.

The protein localises to the cytoplasm. The catalysed reaction is sedoheptulose + ATP = D-sedoheptulose 7-phosphate + ADP + H(+). In terms of biological role, acts as a modulator of macrophage activation through control of glucose metabolism. The chain is Sedoheptulokinase (Shpk) from Mus musculus (Mouse).